Here is a 345-residue protein sequence, read N- to C-terminus: Putative pyridoxal reductase (345 aa).

Catalysis depends on Y60, which acts as the Proton donor.

This sequence belongs to the aldo/keto reductase family.

It is found in the cytoplasm. The protein resides in the nucleus. It carries out the reaction pyridoxine + NADP(+) = pyridoxal + NADPH + H(+). Its pathway is cofactor degradation; B6 vitamer degradation; pyridoxal from pyridoxine (dehydrogenase route): step 1/1. Its function is as follows. Catalyzes the reduction of pyridoxal (PL) with NADPH and oxidation of pyridoxine (PN) with NADP(+). The polypeptide is Putative pyridoxal reductase (Saccharomyces cerevisiae (strain ATCC 204508 / S288c) (Baker's yeast)).